A 533-amino-acid polypeptide reads, in one-letter code: Peptide chain release factor 3 (533 aa).

The region spanning 10–278 is the tr-type G domain; that stretch reads EKRRTFAIIS…TFVEIAPPPQ (269 aa). Residues 19–26, 87–91, and 141–144 each bind GTP; these read SHPDAGKT, DTPGH, and NKMD.

The protein belongs to the TRAFAC class translation factor GTPase superfamily. Classic translation factor GTPase family. PrfC subfamily.

It is found in the cytoplasm. Functionally, increases the formation of ribosomal termination complexes and stimulates activities of RF-1 and RF-2. It binds guanine nucleotides and has strong preference for UGA stop codons. It may interact directly with the ribosome. The stimulation of RF-1 and RF-2 is significantly reduced by GTP and GDP, but not by GMP. The chain is Peptide chain release factor 3 from Salinibacter ruber (strain DSM 13855 / M31).